Reading from the N-terminus, the 505-residue chain is MKSKSIMVQGTASSVGKSILCTGLCRVFYKDGYNVNPFKSQNMSLNSAITCDGGEIGRAQYMQAEASNKVPSVKMNPILLKPNSDRGSQVIINGKVFKNMDAVDYYKFKPQLKKDVSKIYNKLSDESDIIVIEGAGSPAEINLNKEDFVNMGMAKIAKSPVILVGDIDKGGVFASIVGTMMLLKEDERKMVRGVIINKFRGSYEILKPGLKMLEDIIKVPVLGVIPYFNLNLEDEDSATDWSKFNFNSKGDIDVAVIKLPHMSNFTDINPLKMYDDVSIRLIEKVEDLKNPNLIIIPGSKNTIKDMEYLKSSGMNSAILNCHSNGSFVFGICGGFQILGSKIKDPNNIESNITSIEGLNLINSVTEIKTDKTTTLTEARDKIFNCNIKGYEIHMGKTLIDDNNSNFLVINSRNEETCNDIDGAISKDKRVFGTYIHGIFDNSEFTRKFLNLIRKNAGMDEIKETPKDYWEFKNEEYDKLADIIRNNVDMKKLYEIVNEGIDETDN.

The region spanning 251–444 is the GATase cobBQ-type domain; that stretch reads DIDVAVIKLP…IHGIFDNSEF (194 aa). Cys332 (nucleophile) is an active-site residue. The active site involves His436.

The protein belongs to the CobB/CobQ family. CobQ subfamily.

It participates in cofactor biosynthesis; adenosylcobalamin biosynthesis. Catalyzes amidations at positions B, D, E, and G on adenosylcobyrinic A,C-diamide. NH(2) groups are provided by glutamine, and one molecule of ATP is hydrogenolyzed for each amidation. This is Cobyric acid synthase from Clostridium novyi (strain NT).